The primary structure comprises 191 residues: Putative glutathione-dependent formaldehyde-activating enzyme (191 aa).

Residues 20–166 enclose the CENP-V/GFA domain; sequence FPGGNLYCLC…FQSLGLQTYD (147 aa). C27, C29, C48, C50, C53, C95, and C98 together coordinate Zn(2+).

The protein belongs to the Gfa family. It depends on Zn(2+) as a cofactor.

The catalysed reaction is S-(hydroxymethyl)glutathione = glutathione + formaldehyde. The protein operates within one-carbon metabolism; formaldehyde degradation; formate from formaldehyde (glutathione route): step 1/3. Catalyzes the condensation of formaldehyde and glutathione to S-hydroxymethylglutathione. This chain is Putative glutathione-dependent formaldehyde-activating enzyme, found in Aspergillus flavus (strain ATCC 200026 / FGSC A1120 / IAM 13836 / NRRL 3357 / JCM 12722 / SRRC 167).